A 261-amino-acid chain; its full sequence is Ribosomal RNA small subunit methyltransferase J (261 aa).

S-adenosyl-L-methionine contacts are provided by residues Glu129–Arg130 and Asp182.

It belongs to the methyltransferase superfamily. RsmJ family.

It localises to the cytoplasm. The enzyme catalyses guanosine(1516) in 16S rRNA + S-adenosyl-L-methionine = N(2)-methylguanosine(1516) in 16S rRNA + S-adenosyl-L-homocysteine + H(+). Its function is as follows. Specifically methylates the guanosine in position 1516 of 16S rRNA. The chain is Ribosomal RNA small subunit methyltransferase J from Desulfotalea psychrophila (strain LSv54 / DSM 12343).